The sequence spans 541 residues: MKRLRGTLPSDARHAWHPEPLGPAHRDGWDTRDDDRVWDVVVIGSGASGSVAADRLVRQGLDVLMIEEGFRLSPDLGNPELDDMCRTALARDGQGGWTDEGWPWTTSNLGGGTVFYGGASWRYRPFDFDPSELVDAGGLDVRWPYGLAELAPYYDVLERRLGVCGGEEGEGSRGPAHPPTAAAEVLYEAGTALGYEPFPTPLAINRHAHGGRSACERNSLCVSHQCSTGAKGDAVAVFLAPLAAHPNFTLRTGVRALRLNQDRPDAVGSVTCLDRLGRTTHRVRARSFVVACNAIQSAALLLRSRGGRAPDGVGNHSGLVGRGLTMKLSEYVSGVVDAPSAATLADWRAHAGPFSTIAFLDHYLDADCPTGVGGMIYESKNDMPSRIRDDVLELRIETILADHPNLDNRVRLSSHADEDGVPAVVIDYTPDPRDLRRLAYMTDVCERLLRKAGATGIAHEESGFAQGSCHLHGTCRAGDDPATSVVDGWGRVHSAPNVYVVDGGFMPYPGGLNPTLTIQAHALRSAKAVAGDLVSRHTAHV.

The disordered stretch occupies residues 1–29; it reads MKRLRGTLPSDARHAWHPEPLGPAHRDGW. The active-site Proton acceptor is the His-470.

Belongs to the GMC oxidoreductase family. Requires FAD as cofactor.

It catalyses the reaction 6'''-deamino-6'''-hydroxyneomycin C + O2 = 6'''-deamino-6'''-oxoneomycin C + H2O2. The enzyme catalyses paromamine + O2 = 6'-oxoparomamine + H2O2. Its pathway is antibiotic biosynthesis; neomycin biosynthesis. Functionally, glucosaminyl-6'-oxidase involved in the biosynthetic pathway of neomycin by mediating FAD-dependent dehydrogenation of paromamine to 6'-dehydro-6'-oxoparomamine. Works in combination with neamine transaminase to replace the 6-hydroxy group of paromamine with an amino group. Also able to collaborate with neomycin C transaminase to replace the 6'''-hydroxy group of 6'''-hydroxyneomycin C with an amino group. This is Paromamine 6'-oxidase (neoG) from Streptomyces fradiae (Streptomyces roseoflavus).